Consider the following 424-residue polypeptide: Omega-6 fatty acid desaturase, chloroplastic (424 aa).

The N-terminal 63 residues, 1-63 (MACTLADSLL…TRNKVTVIHA (63 aa)), are a transit peptide targeting the chloroplast. Valine 64 is subject to N-acetylvaline. The Histidine box-1 motif lies at 165 to 169 (HDCAH). A Histidine box-2 motif is present at residues 201–205 (HDRHH). Residues 361-365 (HIPHH) carry the Histidine box-3 motif.

This sequence belongs to the fatty acid desaturase type 1 family.

It is found in the plastid. The protein localises to the chloroplast membrane. The catalysed reaction is a (9Z)-octadecenoyl-containing glycerolipid + 2 reduced [2Fe-2S]-[ferredoxin] + O2 + 2 H(+) = a (9Z,12Z)-octadecadienoyl-containing glycerolipid + 2 oxidized [2Fe-2S]-[ferredoxin] + 2 H2O. The protein operates within lipid metabolism; polyunsaturated fatty acid biosynthesis. Its function is as follows. Chloroplast omega-6 fatty acid desaturase introduces the second double bond in the biosynthesis of 16:3 and 18:3 fatty acids, important constituents of plant membranes. It is thought to use ferredoxin as an electron donor and to act on fatty acids esterified to galactolipids, sulfolipids and phosphatidylglycerol. In Glycine max (Soybean), this protein is Omega-6 fatty acid desaturase, chloroplastic.